Consider the following 605-residue polypeptide: Bifunctional purine biosynthesis protein ADE16 (605 aa).

The 147-residue stretch at 1–147 (MSSEAPIALL…KNHGRVSIIS (147 aa)) folds into the MGS-like domain. IMP contacts are provided by residues 35 to 38 (SGGT), 65 to 68 (RVKT), 102 to 103 (CN), and 126 to 127 (DI). K138 serves as the catalytic Proton donor/acceptor; for FAICAR cyclization activity. 5-amino-1-(5-phospho-beta-D-ribosyl)imidazole-4-carboxamide is bound by residues 219 to 220 (RY), H279, G327, D350, N442, and R462. H279 serves as the catalytic Proton acceptor; for AICAR formyltransferase activity. I463 provides a ligand contact to (6R)-10-formyltetrahydrofolate. F554 serves as a coordination point for 5-amino-1-(5-phospho-beta-D-ribosyl)imidazole-4-carboxamide. D559 provides a ligand contact to (6R)-10-formyltetrahydrofolate. R601 contributes to the 5-amino-1-(5-phospho-beta-D-ribosyl)imidazole-4-carboxamide binding site.

Belongs to the PurH family. Homodimer.

It is found in the cytoplasm. The protein localises to the cytosol. It carries out the reaction (6R)-10-formyltetrahydrofolate + 5-amino-1-(5-phospho-beta-D-ribosyl)imidazole-4-carboxamide = 5-formamido-1-(5-phospho-D-ribosyl)imidazole-4-carboxamide + (6S)-5,6,7,8-tetrahydrofolate. The enzyme catalyses IMP + H2O = 5-formamido-1-(5-phospho-D-ribosyl)imidazole-4-carboxamide. Its pathway is purine metabolism; IMP biosynthesis via de novo pathway; 5-formamido-1-(5-phospho-D-ribosyl)imidazole-4-carboxamide from 5-amino-1-(5-phospho-D-ribosyl)imidazole-4-carboxamide (10-formyl THF route): step 1/1. It functions in the pathway purine metabolism; IMP biosynthesis via de novo pathway; IMP from 5-formamido-1-(5-phospho-D-ribosyl)imidazole-4-carboxamide: step 1/1. Bifunctional enzyme that catalyzes the last two steps of purine biosynthesis. Acts as a transformylase that incorporates a formyl group to the AMP analog AICAR (5-amino-1-(5-phospho-beta-D-ribosyl)imidazole-4-carboxamide) to produce the intermediate formyl-AICAR (FAICAR). Also catalyzes the cyclization of FAICAR to IMP. In Cryptococcus neoformans var. grubii serotype A (strain H99 / ATCC 208821 / CBS 10515 / FGSC 9487) (Filobasidiella neoformans var. grubii), this protein is Bifunctional purine biosynthesis protein ADE16.